Here is a 229-residue protein sequence, read N- to C-terminus: Sugar fermentation stimulation protein homolog (229 aa).

It belongs to the SfsA family.

The sequence is that of Sugar fermentation stimulation protein homolog from Caldanaerobacter subterraneus subsp. tengcongensis (strain DSM 15242 / JCM 11007 / NBRC 100824 / MB4) (Thermoanaerobacter tengcongensis).